Here is a 180-residue protein sequence, read N- to C-terminus: UPF0227 protein PC1_2487 (180 aa).

It belongs to the UPF0227 family.

This is UPF0227 protein PC1_2487 from Pectobacterium carotovorum subsp. carotovorum (strain PC1).